A 740-amino-acid chain; its full sequence is Alpha-1,6-mannosylglycoprotein 6-beta-N-acetylglucosaminyltransferase A (740 aa).

Residues Met-1–Lys-13 are Cytoplasmic-facing. Residues Leu-14–Leu-30 form a helical; Signal-anchor for type II membrane protein membrane-spanning segment. Residues His-31–Leu-740 are Lumenal-facing. N-linked (GlcNAc...) asparagine glycosylation is found at Asn-109, Asn-114, and Asn-117. 9 cysteine pairs are disulfide-bonded: Cys-144–Cys-182, Cys-155–Cys-195, Cys-171–Cys-337, Cys-371–Cys-625, Cys-648–Cys-723, Cys-652–Cys-725, Cys-659–Cys-712, Cys-680–Cys-701, and Cys-736–Cys-739. Positions Asn-212–Leu-740 are sufficient for catalytic activity. N-linked (GlcNAc...) asparagine glycosylation occurs at Asn-333. Position 377 to 378 (Asp-377 to Ser-378) interacts with substrate. N-linked (GlcNAc...) asparagine glycosylation is found at Asn-432 and Asn-446. Glu-525 is a UDP-N-acetyl-alpha-D-glucosamine binding site. Position 553 (Lys-553) interacts with substrate.

Belongs to the glycosyltransferase 18 family. N-glycosylated. In terms of processing, a secreted form is released from the membrane after cleavage by gamma-secretase.

It localises to the golgi apparatus membrane. The protein resides in the secreted. The catalysed reaction is N(4)-{beta-D-GlcNAc-(1-&gt;2)-[beta-D-GlcNAc-(1-&gt;4)]-alpha-D-Man-(1-&gt;3)-[beta-D-GlcNAc-(1-&gt;2)-alpha-D-Man-(1-&gt;6)]-beta-D-Man-(1-&gt;4)-beta-D-GlcNAc-(1-&gt;4)-beta-D-GlcNAc}-L-asparaginyl-[protein] + UDP-N-acetyl-alpha-D-glucosamine = N(4)-{beta-D-GlcNAc-(1-&gt;2)-[beta-D-GlcNAc-(1-&gt;4)]-alpha-D-Man-(1-&gt;3)-[beta-D-GlcNAc-(1-&gt;2)-[beta-D-GlcNAc-(1-&gt;6)]-alpha-D-Man-(1-&gt;6)]-beta-D-Man-(1-&gt;4)-beta-D-GlcNAc-(1-&gt;4)-beta-D-GlcNAc}-L-asparaginyl-[protein] + UDP + H(+). It participates in protein modification; protein glycosylation. Its function is as follows. Catalyzes the addition of N-acetylglucosamine (GlcNAc) in beta 1-6 linkage to the alpha-linked mannose of biantennary N-linked oligosaccharides. Catalyzes an important step in the biosynthesis of branched, complex-type N-glycans, such as those found on EGFR, TGFR (TGF-beta receptor) and CDH2. Via its role in the biosynthesis of complex N-glycans, plays an important role in the activation of cellular signaling pathways, reorganization of the actin cytoskeleton, cell-cell adhesion and cell migration. MGAT5-dependent EGFR N-glycosylation enhances the interaction between EGFR and LGALS3 and thereby prevents rapid EGFR endocytosis and prolongs EGFR signaling. Required for efficient interaction between TGFB1 and its receptor. Enhances activation of intracellular signaling pathways by several types of growth factors, including FGF2, PDGF, IGF, TGFB1 and EGF. MGAT5-dependent CDH2 N-glycosylation inhibits CDH2-mediated homotypic cell-cell adhesion and contributes to the regulation of downstream signaling pathways. Promotes cell migration. Contributes to the regulation of the inflammatory response. MGAT5-dependent TCR N-glycosylation enhances the interaction between TCR and LGALS3, limits agonist-induced TCR clustering, and thereby dampens TCR-mediated responses to antigens. Required for normal leukocyte evasation and accumulation at sites of inflammation. Inhibits attachment of monocytes to the vascular endothelium and subsequent monocyte diapedesis. Functionally, promotes proliferation of umbilical vein endothelial cells and angiogenesis, at least in part by promoting the release of the growth factor FGF2 from the extracellular matrix. This chain is Alpha-1,6-mannosylglycoprotein 6-beta-N-acetylglucosaminyltransferase A (MGAT5), found in Cricetulus griseus (Chinese hamster).